A 220-amino-acid polypeptide reads, in one-letter code: Acetate CoA-transferase subunit alpha (220 aa).

24–30 (GGFMGIG) is a CoA binding site.

It belongs to the 3-oxoacid CoA-transferase subunit A family. Heterotetramer composed of two alpha subunits (AtoD) and two beta subunits (AtoA).

It localises to the cytoplasm. The catalysed reaction is an acyl-CoA + acetate = a carboxylate + acetyl-CoA. It catalyses the reaction acetoacetate + acetyl-CoA = acetoacetyl-CoA + acetate. The enzyme catalyses butanoate + acetyl-CoA = butanoyl-CoA + acetate. It carries out the reaction acetoacetate + butanoyl-CoA = acetoacetyl-CoA + butanoate. It functions in the pathway lipid metabolism; short-chain fatty acid metabolism. With respect to regulation, inhibited by p-chloromercuribenzoate. Its function is as follows. Coenzyme A transferase which is involved in short-chain fatty acid degradation and catalyzes the activation of short-chain fatty acids to their respective CoA thiolesters. During acetoacetate degradation, catalyzes the transfer of CoA from acetyl-CoA to acetoacetate by a mechanism involving a covalent enzyme-CoA compound as a reaction intermediate. Utilizes a variety of short chain acyl-CoA and carboxylic acid substrates but exhibits maximal activity with normal and 3-keto substrates. The chain is Acetate CoA-transferase subunit alpha from Escherichia coli (strain K12).